The chain runs to 181 residues: Inorganic pyrophosphatase (181 aa).

Substrate is bound by residues Lys16, Arg30, and Tyr42. 3 residues coordinate Mg(2+): Asp52, Asp57, and Asp89. Tyr126 serves as a coordination point for substrate.

It belongs to the PPase family. Homohexamer. Mg(2+) serves as cofactor.

The protein resides in the cytoplasm. It carries out the reaction diphosphate + H2O = 2 phosphate + H(+). Catalyzes the hydrolysis of inorganic pyrophosphate (PPi) forming two phosphate ions. In Ureaplasma parvum serovar 3 (strain ATCC 700970), this protein is Inorganic pyrophosphatase.